We begin with the raw amino-acid sequence, 384 residues long: WAT1-related protein At4g08290 (384 aa).

10 helical membrane-spanning segments follow: residues 15–35 (LLMIFLQFGAAGTYIVIMATL), 43–63 (VVIVYRNLVAALVLAPFALIF), 73–93 (LSVLWKIMALGFLEPVLDQGF), 104–124 (TYTSAIMNILPSVTFIIAWIL), 140–160 (IIGTLVGLGGALVMTLYKGPL), 186–206 (WVVGTLLILLGCVAWSGFYVL), 219–239 (SLSALICLAGAVQSFAVALVV), 255–275 (FAPLYTGIVSSGITYYVQGMV), 282–302 (VFVTAFNPLCMILVALIASFI), and 307–327 (IHFGCVIGGAVIAAGLYMVVW). 2 EamA domains span residues 25 to 154 (AGTY…LVMT) and 198 to 326 (VAWS…YMVV).

This sequence belongs to the drug/metabolite transporter (DMT) superfamily. Plant drug/metabolite exporter (P-DME) (TC 2.A.7.4) family.

Its subcellular location is the membrane. The sequence is that of WAT1-related protein At4g08290 from Arabidopsis thaliana (Mouse-ear cress).